The following is a 383-amino-acid chain: MKALHFGAGNIGRGFIGKLLADAQAELTFADVNQTVLDLLNSRKSYQVHVVGEQARVEQVNNVSAVNSGSEEAVALIAEADIVTTAVGPQILAKIAGTIAKGLSKRHQQGNSQPLNIIACENMVRGTSQLKQHVFDVLPQEDQAWALQHVGFVDSAVDRIVPPAEAGSSDPLEVTVETFSEWIVDQTQFKGQPPAIAGMELTDNLMAFVERKLFTLNTGHAITAYLGQQAGLQTIRDAILDPKIRQVVKGAMEESGAVLIKRYGFDAAKHAAYIDKILSRFENPYLHDDVERVGRQPLRKLSAGDRLIKPLLGTLEYGLPHANLIQGIAAAMSYRSEQDPQAKELVELLAKLGPKAALAQISGLPAESEVVEQAVAVYNAMQK.

3–14 (ALHFGAGNIGRG) serves as a coordination point for NAD(+).

The protein belongs to the mannitol dehydrogenase family.

It carries out the reaction D-mannitol 1-phosphate + NAD(+) = beta-D-fructose 6-phosphate + NADH + H(+). The protein is Mannitol-1-phosphate 5-dehydrogenase of Serratia proteamaculans (strain 568).